The sequence spans 563 residues: Germacrene-A synthase (563 aa).

Residues Asp-316, Asp-320, Asp-460, Thr-464, and Glu-468 each contribute to the Mg(2+) site. The DDXXD motif signature appears at 316-320; the sequence is DDTYD.

This sequence belongs to the terpene synthase family. Tpsa subfamily. The cofactor is Mg(2+). Requires Mn(2+) as cofactor. As to expression, high expression in disk florets, moderate expression in ray florets and detected in leaves and stems, but not in roots.

The catalysed reaction is (2E,6E)-farnesyl diphosphate = (+)-(R)-germacrene A + diphosphate. It functions in the pathway secondary metabolite biosynthesis; terpenoid biosynthesis. In terms of biological role, sesquiterpene synthase involved in germacrene A biosynthesis. May be involved in the biosynthesis of the sesquiterpene lactone matricine, one of the major active compounds of chamomile flowers. This Matricaria chamomilla var. recutita (German chamomile) protein is Germacrene-A synthase.